A 455-amino-acid chain; its full sequence is MHEIITLESLCQALADGEIAAAELRERALDTEARLARLNCFIREGDAVSQFGEADHAMKGTPLWGMPVSFKDNICVRGLPLTAGTRGMSGFVSDQDAAIVSQLRALGAVVAGKNNMHELSFGVTSINPHWGTVGNPVAPGYCAGGSSGGSAAAVASGIVPLSVGTDTGGSIRIPAAFCGITGFRPTTGRWSTAGIIPVSHTKDCVGLLTRTAGDAGFLYGLLSGKQQSFPLSRTAPCRIGLPVSMWSDLDGEVERACVNALSLLRKTGFEFIEIDDADIVELNQTLTFTVPLYEFFADLAQSLLSLGWKHGIHHIFAQVDDANVKGIINHHLGEGAIKPAHYLSSLQNGELLKRKMDELFARHNIELLGYPTVPCRVPHLDHADRPEFFSQAIRNTDLASNAMLPSITIPVGPEGRLPVGLSFDALRGRDALLLSRVSAIEQVLGFVRKVLPHTT.

Residues Lys-71 and Ser-146 each act as charge relay system in the active site. Residue Ser-170 is the Acyl-ester intermediate of the active site.

Belongs to the amidase family.

The protein operates within plant hormone metabolism; auxin biosynthesis. Hydrolyzes indole-3-acetamide (IAM) into indole-3-acetic acid (IAA). The sequence is that of Indoleacetamide hydrolase (iaaH) from Pseudomonas savastanoi (Pseudomonas syringae pv. savastanoi).